The sequence spans 109 residues: Small ribosomal subunit protein uS17 (109 aa).

It belongs to the universal ribosomal protein uS17 family. Part of the 30S ribosomal subunit.

In terms of biological role, one of the primary rRNA binding proteins, it binds specifically to the 5'-end of 16S ribosomal RNA. The polypeptide is Small ribosomal subunit protein uS17 (Methanococcus maripaludis (strain DSM 14266 / JCM 13030 / NBRC 101832 / S2 / LL)).